Here is a 268-residue protein sequence, read N- to C-terminus: Proliferating cell nuclear antigen (268 aa).

The DNA-binding element occupies 61-80; that stretch reads RCDRNPSMGMNLNNMAKMLK.

This sequence belongs to the PCNA family.

The protein localises to the nucleus. Functionally, this protein is an auxiliary protein of DNA polymerase delta and is involved in the control of eukaryotic DNA replication by increasing the polymerase's processibility during elongation of the leading strand. The sequence is that of Proliferating cell nuclear antigen from Catharanthus roseus (Madagascar periwinkle).